A 320-amino-acid chain; its full sequence is o-succinylbenzoate synthase (320 aa).

Lys133 functions as the Proton donor in the catalytic mechanism. Mg(2+) is bound by residues Asp161, Glu190, and Asp213. The active-site Proton acceptor is Lys235.

Belongs to the mandelate racemase/muconate lactonizing enzyme family. MenC type 1 subfamily. Requires a divalent metal cation as cofactor.

It catalyses the reaction (1R,6R)-6-hydroxy-2-succinyl-cyclohexa-2,4-diene-1-carboxylate = 2-succinylbenzoate + H2O. It functions in the pathway quinol/quinone metabolism; 1,4-dihydroxy-2-naphthoate biosynthesis; 1,4-dihydroxy-2-naphthoate from chorismate: step 4/7. Its pathway is quinol/quinone metabolism; menaquinone biosynthesis. Functionally, converts 2-succinyl-6-hydroxy-2,4-cyclohexadiene-1-carboxylate (SHCHC) to 2-succinylbenzoate (OSB). This chain is o-succinylbenzoate synthase, found in Citrobacter koseri (strain ATCC BAA-895 / CDC 4225-83 / SGSC4696).